The primary structure comprises 77 residues: Protein OPG195 (77 aa).

A signal peptide spans 1-17 (MRSLIIVLLFPSIIYSM).

The protein belongs to the chordopoxvirinae B9 protein family.

In Homo sapiens (Human), this protein is Protein OPG195 (OPG197).